Here is a 106-residue protein sequence, read N- to C-terminus: U1-lycotoxin-Ls1b (106 aa).

Positions 1 to 19 (MKVLVVVALLVTLISYSSS) are cleaved as a signal peptide. The propeptide occupies 20–40 (EGIDDPEADELLSLMANEQTR). 4 cysteine pairs are disulfide-bonded: Cys43/Cys58, Cys50/Cys67, Cys57/Cys85, and Cys69/Cys83.

It belongs to the neurotoxin 19 (CSTX) family. 04 (U1-Lctx) subfamily. As to expression, expressed by the venom gland.

The protein resides in the secreted. In Lycosa singoriensis (Wolf spider), this protein is U1-lycotoxin-Ls1b.